A 495-amino-acid chain; its full sequence is DNA-directed RNA polymerase subunit alpha (495 aa).

Positions methionine 1–proline 301 are alpha N-terminal domain (alpha-NTD). 2 disordered regions span residues serine 159 to histidine 227 and glutamine 391 to threonine 495. An insert region spans residues proline 170–threonine 237. The segment covering aspartate 172–serine 186 has biased composition (basic and acidic residues). 2 stretches are compositionally biased toward polar residues: residues valine 207–threonine 219 and glutamine 391–alanine 403. An alpha C-terminal domain (alpha-CTD) region spans residues alanine 317–threonine 495. A compositionally biased stretch (basic and acidic residues) spans arginine 417–arginine 426. Basic residues predominate over residues arginine 444 to alanine 453. Polar residues-rich tracts occupy residues lysine 464–glutamate 473 and leucine 486–threonine 495.

It belongs to the RNA polymerase alpha chain family. In plastids the minimal PEP RNA polymerase catalytic core is composed of four subunits: alpha, beta, beta', and beta''. When a (nuclear-encoded) sigma factor is associated with the core the holoenzyme is formed, which can initiate transcription.

It is found in the plastid. The protein resides in the chloroplast. The catalysed reaction is RNA(n) + a ribonucleoside 5'-triphosphate = RNA(n+1) + diphosphate. DNA-dependent RNA polymerase catalyzes the transcription of DNA into RNA using the four ribonucleoside triphosphates as substrates. In Nephroselmis olivacea (Green alga), this protein is DNA-directed RNA polymerase subunit alpha.